The sequence spans 418 residues: Tyrosine--tRNA ligase (418 aa).

Y34 serves as a coordination point for L-tyrosine. The short motif at 39–48 is the 'HIGH' region element; the sequence is PTADSLHLGH. 2 residues coordinate L-tyrosine: Y169 and Q173. Positions 229-233 match the 'KMSKS' region motif; that stretch reads KFGKS. K232 serves as a coordination point for ATP. Residues 352-410 enclose the S4 RNA-binding domain; that stretch reads LNIVELLVTSGIVNSKRQAREDVQNGAIYVNGERVQDLDYTLSDSDKIDGELTVIRRGK.

Belongs to the class-I aminoacyl-tRNA synthetase family. TyrS type 1 subfamily. Homodimer.

It is found in the cytoplasm. It catalyses the reaction tRNA(Tyr) + L-tyrosine + ATP = L-tyrosyl-tRNA(Tyr) + AMP + diphosphate + H(+). Catalyzes the attachment of tyrosine to tRNA(Tyr) in a two-step reaction: tyrosine is first activated by ATP to form Tyr-AMP and then transferred to the acceptor end of tRNA(Tyr). The protein is Tyrosine--tRNA ligase of Streptococcus suis (strain 98HAH33).